The sequence spans 33 residues: rho operon leader peptide (33 aa).

Over residues 1–25 (MRSEQISGSSLNPSCRFSSAYSPVT) the composition is skewed to polar residues. Residues 1–33 (MRSEQISGSSLNPSCRFSSAYSPVTRQRKDMSR) form a disordered region.

In Escherichia coli O157:H7, this protein is rho operon leader peptide (rhoL).